A 238-amino-acid polypeptide reads, in one-letter code: Sugar fermentation stimulation protein homolog (238 aa).

This sequence belongs to the SfsA family.

The polypeptide is Sugar fermentation stimulation protein homolog (Alteromonas mediterranea (strain DSM 17117 / CIP 110805 / LMG 28347 / Deep ecotype)).